Consider the following 184-residue polypeptide: 3-hydroxydecanoyl-[acyl-carrier-protein] dehydratase (184 aa).

H77 is an active-site residue.

It belongs to the thioester dehydratase family. FabA subfamily. In terms of assembly, homodimer.

It is found in the cytoplasm. It carries out the reaction a (3R)-hydroxyacyl-[ACP] = a (2E)-enoyl-[ACP] + H2O. The enzyme catalyses (3R)-hydroxydecanoyl-[ACP] = (2E)-decenoyl-[ACP] + H2O. It catalyses the reaction (2E)-decenoyl-[ACP] = (3Z)-decenoyl-[ACP]. The protein operates within lipid metabolism; fatty acid biosynthesis. In terms of biological role, necessary for the introduction of cis unsaturation into fatty acids. Catalyzes the dehydration of (3R)-3-hydroxydecanoyl-ACP to E-(2)-decenoyl-ACP and then its isomerization to Z-(3)-decenoyl-ACP. Can catalyze the dehydratase reaction for beta-hydroxyacyl-ACPs with saturated chain lengths up to 16:0, being most active on intermediate chain length. In Hyphomonas neptunium (strain ATCC 15444), this protein is 3-hydroxydecanoyl-[acyl-carrier-protein] dehydratase.